The sequence spans 204 residues: Methylthioribulose-1-phosphate dehydratase (204 aa).

Histidine 94 and histidine 96 together coordinate Zn(2+).

The protein belongs to the aldolase class II family. MtnB subfamily. The cofactor is Zn(2+).

It catalyses the reaction 5-(methylsulfanyl)-D-ribulose 1-phosphate = 5-methylsulfanyl-2,3-dioxopentyl phosphate + H2O. It functions in the pathway amino-acid biosynthesis; L-methionine biosynthesis via salvage pathway; L-methionine from S-methyl-5-thio-alpha-D-ribose 1-phosphate: step 2/6. In terms of biological role, catalyzes the dehydration of methylthioribulose-1-phosphate (MTRu-1-P) into 2,3-diketo-5-methylthiopentyl-1-phosphate (DK-MTP-1-P). The chain is Methylthioribulose-1-phosphate dehydratase from Pseudomonas syringae pv. syringae (strain B728a).